A 196-amino-acid polypeptide reads, in one-letter code: Large ribosomal subunit protein uL11m (196 aa).

Belongs to the universal ribosomal protein uL11 family. As to quaternary structure, component of the mitochondrial ribosome large subunit (39S) which comprises a 16S rRNA and about 50 distinct proteins.

The protein localises to the mitochondrion. The polypeptide is Large ribosomal subunit protein uL11m (mRpL11) (Drosophila melanogaster (Fruit fly)).